We begin with the raw amino-acid sequence, 496 residues long: Catalase isozyme 3 (496 aa).

The segment at 1–25 is disordered; sequence MTMDPTKFRPSSSHDTTVTTTNAGA. Over residues 9-23 the composition is skewed to polar residues; sequence RPSSSHDTTVTTTNA. Residues H67 and N140 contribute to the active site. Residue Y351 participates in heme binding. A disordered region spans residues 402–422; the sequence is PLRQAAPPTPLPPRPVAGRRE.

This sequence belongs to the catalase family. As to quaternary structure, homotetramer. Heme is required as a cofactor. As to expression, leaf mesophyll cells, pericarp, seedling roots and the coleoptile.

The protein localises to the mitochondrion. It catalyses the reaction 2 H2O2 = O2 + 2 H2O. Functionally, occurs in almost all aerobically respiring organisms and serves to protect cells from the toxic effects of hydrogen peroxide. Its levels are highest in the light period and are lowest in the dark period, hence it may be important for scavenging hydrogen peroxide at night, rather than during the day. The chain is Catalase isozyme 3 (CAT3) from Zea mays (Maize).